The sequence spans 753 residues: Polyribonucleotide nucleotidyltransferase (753 aa).

Mg(2+) contacts are provided by Asp-523 and Asp-529. One can recognise a KH domain in the interval 589-648 (PRIISVRIPVDKIGAVIGPKGAMINQIQDDTGADITIEDDGTVLIGATDGASAEAARSAV). An S1 motif domain is found at 660 to 732 (GERYLGTVVK…DRGKLSLSPV (73 aa)). The segment at 733–753 (GAESDAVAETADAIESSQTEA) is disordered.

Belongs to the polyribonucleotide nucleotidyltransferase family. The cofactor is Mg(2+).

It is found in the cytoplasm. It catalyses the reaction RNA(n+1) + phosphate = RNA(n) + a ribonucleoside 5'-diphosphate. In terms of biological role, involved in mRNA degradation. Catalyzes the phosphorolysis of single-stranded polyribonucleotides processively in the 3'- to 5'-direction. The polypeptide is Polyribonucleotide nucleotidyltransferase (Micrococcus luteus (strain ATCC 4698 / DSM 20030 / JCM 1464 / CCM 169 / CCUG 5858 / IAM 1056 / NBRC 3333 / NCIMB 9278 / NCTC 2665 / VKM Ac-2230) (Micrococcus lysodeikticus)).